The sequence spans 585 residues: uncharacterized protein (585 aa).

The interval 27–59 is disordered; it reads DDSERSVKSVSVSISDDEDSKTDVQDNMATPST.

This is an uncharacterized protein from Saccharomyces cerevisiae (strain ATCC 204508 / S288c) (Baker's yeast).